We begin with the raw amino-acid sequence, 398 residues long: MACNFAVRVIYYPKEIHGVSVLNTNRSRKSRFSCRVMKLSTGVSAVAANPVRTSEERVYEVVLKQAALVREEKRSSRGLCLDTKRTGSKSFDKSENDDAGMKSWNLLNEAYDRCGEVCAEYAKTFYLGTLLMTPERRRAVWAIYVWCRRTDELVDGPNASHITPKALDRWEKRLNDLFDGQPYDMYDAALADTVSTYPVDIQPFKDMIDGMRMDLKKSRYQTFDELYLYCYYVAGTVGLMSVPVMGIAPESKATTESVYSAALALGIANQLTNILRDVGEDARRGRIYLPQEELKLAGITPEYIFKGKVTDKWRSFMKGQIKRARMFFDEAEKGVAELSSASRWPVWASLLLYKQILDAIEANDYDNFTKRAYVGKAKKLVSLPLAYSRALFAPSTVR.

The protein belongs to the phytoene/squalene synthase family. As to quaternary structure, monomer.

It localises to the plastid. The protein resides in the chloroplast. It carries out the reaction 2 (2E,6E,10E)-geranylgeranyl diphosphate = 15-cis-phytoene + 2 diphosphate. It functions in the pathway carotenoid biosynthesis; phytoene biosynthesis; all-trans-phytoene from geranylgeranyl diphosphate: step 1/1. Functionally, catalyzes the reaction from prephytoene diphosphate to phytoene. This chain is Phytoene synthase, chloroplastic (PSY), found in Daucus carota (Wild carrot).